We begin with the raw amino-acid sequence, 744 residues long: Collagen alpha-1(VIII) chain (744 aa).

The N-terminal stretch at 1–27 is a signal peptide; it reads MAVPPGPPQLLQVLLTISLGSIRLIQA. The segment at 29–117 is nonhelical region (NC2); sequence AYYGIKPLPP…GKEIPLASLR (89 aa). Basic and acidic residues predominate over residues 101 to 110; the sequence is KEAVPKKGKE. Disordered regions lie at residues 101–435 and 478–584; these read KEAV…GLQG and LLGP…QGEY. The segment at 118–571 is triple-helical region; it reads GEQGPRGEPG…PGPPGPPGPP (454 aa). Pro residues predominate over residues 128 to 137; the sequence is PRGPPGPPGL. Low complexity predominate over residues 168–190; that stretch reads KPGAMGMPGAKGEIGPKGEIGPM. Residues 203–217 show a composition bias toward gly residues; it reads GLPGIGKPGGPGLPG. Residues 288–298 show a composition bias toward pro residues; the sequence is KPGPPGEPGPQ. The span at 328–337 shows a compositional bias: gly residues; sequence GFPGGKGEQG. Positions 389 to 403 are enriched in pro residues; the sequence is PGEPGLPGIPGPMGP. Positions 411–420 are enriched in gly residues; sequence GPKGEGGIVG. 2 stretches are compositionally biased toward low complexity: residues 478–506 and 540–556; these read LLGP…TGPS and LHGP…QGQP. Pro residues predominate over residues 558 to 579; the sequence is LPGPPGPPGPPGPPAVMPPTPA. Residues 572 to 744 form a nonhelical region (NC1) region; sequence AVMPPTPAPQ…SFSGYLLYPM (173 aa). Positions 611–744 constitute a C1q domain; that stretch reads PAYEMPAFTA…SFSGYLLYPM (134 aa).

Homotrimers, or heterotrimers in association with alpha 2(VIII) type collagens. Four homotrimers can form a tetrahedron stabilized by central interacting C-terminal NC1 trimers. Prolines at the third position of the tripeptide repeating unit (G-X-Y) are hydroxylated in some or all of the chains. In terms of processing, proteolytically cleaved by neutrophil elastase, in vitro. Proteolytic processing produces the C-terminal NC1 domain fragment, vastatin.

It localises to the secreted. The protein resides in the extracellular space. The protein localises to the extracellular matrix. Its subcellular location is the basement membrane. Macromolecular component of the subendothelium. Major component of the Descemet's membrane (basement membrane) of corneal endothelial cells. Also a component of the endothelia of blood vessels. Necessary for migration and proliferation of vascular smooth muscle cells and thus, has a potential role in the maintenance of vessel wall integrity and structure, in particular in atherogenesis. In terms of biological role, vastatin, the C-terminal fragment comprising the NC1 domain, inhibits aortic endothelial cell proliferation and causes cell apoptosis. The sequence is that of Collagen alpha-1(VIII) chain (COL8A1) from Oryctolagus cuniculus (Rabbit).